The primary structure comprises 453 residues: MEQIPQEQKTEPFLASFTTTEKLGTETPTTSITPNTQFRGRYEKPNCAVCNEVGDGLHFGAEACRACTAFFRRSVALSKKYECRAGRNCEVSSNIRCMCRSCRYDKCIEVGMNPECVQNRRENDTPKADLQFDTSKTEIRRPIPNFNIVPQASAVPSTSNFMDFSIFKDTPISNFSAFSPASLPGLSSSPSLETMPLLERMRINYDKMENARNVIHRREGENIFQQKVPRAITFREATEVTTKEVSLVADWIEWCFDDFGLLPVDQKTILFQNFFVFFCMLERAFMTVKSGRDGIVVMASKDYIDYDNLEGFFKECNSGTGGTPAEIAKLIRPSFELQKRSLINLMRLENVDSYEFFALCVMLFWDFGLEGQSDECNEVGRRVKHRVTREMTFYLRNVKKHEEPLYRMASVVSILPSLQRAVRRFQEDIEMANIFNIYALPENFVNIINGKFN.

The segment at 1 to 37 (MEQIPQEQKTEPFLASFTTTEKLGTETPTTSITPNTQ) is disordered. Positions 18 to 36 (TTTEKLGTETPTTSITPNT) are enriched in low complexity. Residues 44 to 119 (KPNCAVCNEV…VGMNPECVQN (76 aa)) constitute a DNA-binding region (nuclear receptor). NR C4-type zinc fingers lie at residues 47 to 67 (CAVCNEVGDGLHFGAEACRAC) and 83 to 107 (CRAGRNCEVSSNIRCMCRSCRYDKC). In terms of domain architecture, NR LBD spans 178-451 (FSPASLPGLS…ENFVNIINGK (274 aa)).

The protein belongs to the nuclear hormone receptor family.

It is found in the nucleus. Functionally, orphan nuclear receptor. This Caenorhabditis elegans protein is Nuclear hormone receptor family member nhr-12 (nhr-12).